We begin with the raw amino-acid sequence, 438 residues long: Glutamyl-tRNA(Gln) amidotransferase subunit D (438 aa).

Positions 91–421 (KNLSILSTGG…SEIYEIMKTN (331 aa)) constitute an Asparaginase/glutaminase domain. Catalysis depends on residues Thr-101, Thr-177, Asp-178, and Lys-254.

The protein belongs to the asparaginase 1 family. GatD subfamily. As to quaternary structure, heterodimer of GatD and GatE.

The enzyme catalyses L-glutamyl-tRNA(Gln) + L-glutamine + ATP + H2O = L-glutaminyl-tRNA(Gln) + L-glutamate + ADP + phosphate + H(+). Its function is as follows. Allows the formation of correctly charged Gln-tRNA(Gln) through the transamidation of misacylated Glu-tRNA(Gln) in organisms which lack glutaminyl-tRNA synthetase. The reaction takes place in the presence of glutamine and ATP through an activated gamma-phospho-Glu-tRNA(Gln). The GatDE system is specific for glutamate and does not act on aspartate. In Methanosphaera stadtmanae (strain ATCC 43021 / DSM 3091 / JCM 11832 / MCB-3), this protein is Glutamyl-tRNA(Gln) amidotransferase subunit D.